The following is a 95-amino-acid chain: Putative small ubiquitin-related modifier 7 (95 aa).

Residues 13–90 form the Ubiquitin-like domain; the sequence is SHITIKIKSQ…IDAFVDQIAG (78 aa). G90 participates in a covalent cross-link: Glycyl lysine isopeptide (Gly-Lys) (interchain with K-? in acceptor proteins).

It belongs to the ubiquitin family. SUMO subfamily. As to quaternary structure, interacts with SAE2, SCE1, SIZ1 and MMS21 Covalently attached to a number of proteins.

It is found in the nucleus. The protein resides in the cytoplasm. In terms of biological role, ubiquitin-like protein which can be covalently attached to target lysines as a monomer. Does not seem to be involved in protein degradation and may function as an antagonist of ubiquitin in the degradation process. The protein is Putative small ubiquitin-related modifier 7 (SUMO7) of Arabidopsis thaliana (Mouse-ear cress).